Consider the following 2153-residue polypeptide: RNA-directed RNA polymerase L (2153 aa).

The Mn(2+) site is built by H36, E54, D97, E110, and V111. K124 (for endonuclease activity) is an active-site residue. The RdRp catalytic domain maps to 957-1143; that stretch reads TGKSIKFKRK…AINQEMWKSM (187 aa). D1100 is a Mg(2+) binding site.

This sequence belongs to the Bunyavirales RNA polymerase family. In terms of assembly, interacts with the viral nucleoprotein. It depends on Mn(2+) as a cofactor. Requires Mg(2+) as cofactor.

The protein resides in the host cytoplasm. It localises to the host perinuclear region. The catalysed reaction is RNA(n) + a ribonucleoside 5'-triphosphate = RNA(n+1) + diphosphate. RNA-dependent RNA polymerase, which is responsible for the replication and transcription of the viral RNA genome using antigenomic RNA as an intermediate. During transcription, synthesizes subgenomic RNAs and assures their capping by a cap-snatching mechanism, which involves the endonuclease activity cleaving the host capped pre-mRNAs. These short capped RNAs are then used as primers for viral transcription. Cleaves ssRNA substrates but not DNA. Seems to downregulate the expression of its own and heterologous mRNAs through its endonuclease activity. The protein is RNA-directed RNA polymerase L of Abrothrix longipilis (Long-haired grass mouse).